The chain runs to 947 residues: Pyruvate, phosphate dikinase 1, chloroplastic (947 aa).

Residues 1-62 (MAASVSRAIC…GRGQHCSPLR (62 aa)) constitute a chloroplast transit peptide. A disordered region spans residues 21–54 (DREATSFARRSVAAPRPPHAKAAGVIRSDSGAGR). A63 carries the N-acetylalanine; partial modification. T309 carries the post-translational modification Phosphothreonine. A Phosphoserine modification is found at S506. T527 is subject to Phosphothreonine; by PDRP1. Residue S528 is modified to Phosphoserine; by PDRP1. The active-site Tele-phosphohistidine intermediate is H529. Residues R635, R692, E821, G842, T843, N844, and D845 each coordinate substrate. E821 serves as a coordination point for Mg(2+). D845 is a binding site for Mg(2+). C907 functions as the Proton donor in the catalytic mechanism.

Belongs to the PEP-utilizing enzyme family. As to quaternary structure, homotetramer. Mg(2+) serves as cofactor. In terms of processing, phosphorylation of Thr-527 in the dark inactivates the enzyme, dephosphorylation upon light stimulation reactivates the enzyme. More highly phosphorylated when grown under high rather than low light regimes (70 vs 900 umol photons/m-2/s). the degree of phosphorylation is strictly regulated by light intensity and the light/dark transition has no influence. Phosphorylated in both mesophyll and bundle sheath cells. The phosphorylation at Ser-528 may be important for the phosphorylation at Thr-527 and may also be regulated by light intensity. Isoform C4PPDKZM1 mainly localized in mesophyll cells and only a low level is found in bundle sheath cells. Isoform CYPPDKZM1 expressed in roots, stems and etiolated leaves.

Its subcellular location is the plastid. It localises to the chloroplast. It is found in the cytoplasm. The catalysed reaction is pyruvate + phosphate + ATP = phosphoenolpyruvate + AMP + diphosphate + H(+). The protein operates within photosynthesis; C4 acid pathway. With respect to regulation, activated by light-induced dephosphorylation. Inhibited by dark-induced phosphorylation. Both reactions are catalyzed by PDRP1. Inactivated by cold due to the dissociation of the homotetramer. Independent of circadian regulation. Formation of phosphoenolpyruvate, which is the primary acceptor of CO(2) in C4 and some Crassulacean acid metabolism plants. The chain is Pyruvate, phosphate dikinase 1, chloroplastic from Zea mays (Maize).